A 329-amino-acid polypeptide reads, in one-letter code: Aspartate carbamoyltransferase catalytic subunit (329 aa).

2 residues coordinate carbamoyl phosphate: arginine 63 and threonine 64. Lysine 91 contributes to the L-aspartate binding site. Residues arginine 113, histidine 141, and glutamine 144 each contribute to the carbamoyl phosphate site. Positions 179 and 234 each coordinate L-aspartate. Glycine 275 and proline 276 together coordinate carbamoyl phosphate.

The protein belongs to the aspartate/ornithine carbamoyltransferase superfamily. ATCase family. In terms of assembly, heterododecamer (2C3:3R2) of six catalytic PyrB chains organized as two trimers (C3), and six regulatory PyrI chains organized as three dimers (R2).

The enzyme catalyses carbamoyl phosphate + L-aspartate = N-carbamoyl-L-aspartate + phosphate + H(+). It functions in the pathway pyrimidine metabolism; UMP biosynthesis via de novo pathway; (S)-dihydroorotate from bicarbonate: step 2/3. Functionally, catalyzes the condensation of carbamoyl phosphate and aspartate to form carbamoyl aspartate and inorganic phosphate, the committed step in the de novo pyrimidine nucleotide biosynthesis pathway. The chain is Aspartate carbamoyltransferase catalytic subunit from Magnetococcus marinus (strain ATCC BAA-1437 / JCM 17883 / MC-1).